A 462-amino-acid polypeptide reads, in one-letter code: A-type ATP synthase subunit B (462 aa).

This sequence belongs to the ATPase alpha/beta chains family. As to quaternary structure, has multiple subunits with at least A(3), B(3), C, D, E, F, H, I and proteolipid K(x).

The protein resides in the cell membrane. In terms of biological role, component of the A-type ATP synthase that produces ATP from ADP in the presence of a proton gradient across the membrane. The B chain is a regulatory subunit. The polypeptide is A-type ATP synthase subunit B (Pyrococcus furiosus (strain ATCC 43587 / DSM 3638 / JCM 8422 / Vc1)).